A 217-amino-acid polypeptide reads, in one-letter code: Putative 3-methyladenine DNA glycosylase (217 aa).

Residues 105–145 (SHNNVYTIDTAKIKSQITDEKTQSIIIRKNRRIMKFYIPNL) enclose the RPE2 insert domain.

This sequence belongs to the DNA glycosylase MPG family.

This Rickettsia prowazekii (strain Madrid E) protein is Putative 3-methyladenine DNA glycosylase.